The primary structure comprises 90 residues: Probable Fe(2+)-trafficking protein (90 aa).

The protein belongs to the Fe(2+)-trafficking protein family.

Functionally, could be a mediator in iron transactions between iron acquisition and iron-requiring processes, such as synthesis and/or repair of Fe-S clusters in biosynthetic enzymes. The polypeptide is Probable Fe(2+)-trafficking protein (Pseudomonas fluorescens (strain Pf0-1)).